The sequence spans 327 residues: MENVFDYEDIQLIPAKCVVNSRSECDTSVTLGNRTFKLPVVPANMQTIIDEKIAKYLAEKNYFYIMHRFEPEKRIDFIQDMQEYNLFTSISVGVKEEEYTFIEDLAAKQLIPDYITIDIAHGHSDAVIKMIKHIKNNLPSSFVIAGNVGTPEAVRELENAGADATKVGIGPGKVCITKIKTGFGTGGWQLAALRWCAKAASKPIIADGGIRTHGDIAKSIRFGASMVMIGSLFAGHEESPGETIEQDGKKIKEYFGSASEFQKGEKKNVEGKKMYVEHKGPLQDTLTEMEQDLQSSISYAGGKQLDAIRNVDYVVVKNSIFNGDKVF.

C175 acts as the Thioimidate intermediate in catalysis. 204-227 is an NADP(+) binding site; it reads IIADGGIRTHGDIAKSIRFGASMV.

The protein belongs to the IMPDH/GMPR family. GuaC type 2 subfamily.

It carries out the reaction IMP + NH4(+) + NADP(+) = GMP + NADPH + 2 H(+). Its function is as follows. Catalyzes the irreversible NADPH-dependent deamination of GMP to IMP. It functions in the conversion of nucleobase, nucleoside and nucleotide derivatives of G to A nucleotides, and in maintaining the intracellular balance of A and G nucleotides. In Oceanobacillus iheyensis (strain DSM 14371 / CIP 107618 / JCM 11309 / KCTC 3954 / HTE831), this protein is GMP reductase.